Here is a 263-residue protein sequence, read N- to C-terminus: MGLMNAFDSQTEDSSPAIGRNLRSRPLARKKLSEMVEEELEQMIRRREFGEGEQLPSERELMAFFNVGRPSVREALAALKRKGLVQINNGERARVSRPSADTIIGELSGMAKDFLSHPGGIAHFEQLRLFFESSLVRYAAEHATDEQIDLLAKALEINSQSLDNNAAFIRSDVDFHRVLAEIPGNPIFMAIHVALLDWLIAARPTVTDQALHEHNNVSYQQHIAIVDAIRRHDPDEADRALQSHLNSVSATWYAFGQTTNKKK.

A disordered region spans residues 1–22; sequence MGLMNAFDSQTEDSSPAIGRNL. Residues 30 to 98 form the HTH gntR-type domain; that stretch reads KKLSEMVEEE…NGERARVSRP (69 aa). The segment at residues 58-77 is a DNA-binding region (H-T-H motif); that stretch reads ERELMAFFNVGRPSVREALA.

This sequence belongs to the NanR family.

Functionally, transcriptional repressor that controls expression of the genes required for the catabolism of sialic acids. This chain is HTH-type transcriptional repressor NanR, found in Shigella dysenteriae serotype 1 (strain Sd197).